The sequence spans 416 residues: Transcription factor LATE FLOWERING (416 aa).

Low complexity-rich tracts occupy residues 176-186 (STTTTTTALPP) and 200-212 (TSPTTKTTTTSET). 2 disordered regions span residues 176-226 (STTT…AGGS) and 276-311 (LGGPASASDPSSRPPPPPQRPRRKNVRISSDPQTVA). The interval 303 to 316 (ISSDPQTVAARLRR) is basic motif; degenerate. Positions 303-352 (ISSDPQTVAARLRRERVSERLRVLQRLVPGGSKMDTATMLDEAASYLKFL) constitute a bHLH domain. Residues 317–352 (ERVSERLRVLQRLVPGGSKMDTATMLDEAASYLKFL) form a helix-loop-helix motif region.

This sequence belongs to the bHLH protein family. Interacts with PIL13 and PIL15.

Its subcellular location is the nucleus. Its function is as follows. Transcription factor involved in the negative regulation of flowering. May be involved in the repression of the flowering factor GI and HD1 by interacting with PIL13 and PIL15 and competing with PRR1. Possesses transactivation activity in yeast. The chain is Transcription factor LATE FLOWERING from Oryza sativa subsp. japonica (Rice).